A 162-amino-acid polypeptide reads, in one-letter code: CASP-like protein 1C1 (162 aa).

At 1 to 7 (MFSAKAR) the chain is on the cytoplasmic side. A helical transmembrane segment spans residues 8–28 (WIVAVVLRVAAAGAAAVAAVL). Residues 29–52 (MAMSHDEVIVYGMEVQAKFRYTPS) are Extracellular-facing. A helical membrane pass occupies residues 53 to 73 (LVFFVAANAAVSACSLVVLLV). Residues 74–83 (PSSTSKLAAR) are Cytoplasmic-facing. Residues 84–104 (LLLMADVVLGMVLAGAFAAAG) form a helical membrane-spanning segment. The Extracellular portion of the chain corresponds to 105 to 135 (AMAELGKNGNSHAGWIAICVQVPLFCDRVRS). Residues 136 to 156 (ALVAGSATIVLYYLMLMYSIY) traverse the membrane as a helical segment. Over 157 to 162 (TLPMFP) the chain is Cytoplasmic.

The protein belongs to the Casparian strip membrane proteins (CASP) family. As to quaternary structure, homodimer and heterodimers.

It is found in the cell membrane. This is CASP-like protein 1C1 from Oryza sativa subsp. japonica (Rice).